The chain runs to 508 residues: ATP synthase subunit alpha, chloroplastic (508 aa).

172–179 (GDRQTGKT) contacts ATP.

Belongs to the ATPase alpha/beta chains family. As to quaternary structure, F-type ATPases have 2 components, CF(1) - the catalytic core - and CF(0) - the membrane proton channel. CF(1) has five subunits: alpha(3), beta(3), gamma(1), delta(1), epsilon(1). CF(0) has four main subunits: a, b, b' and c.

Its subcellular location is the plastid. The protein localises to the chloroplast thylakoid membrane. The enzyme catalyses ATP + H2O + 4 H(+)(in) = ADP + phosphate + 5 H(+)(out). In terms of biological role, produces ATP from ADP in the presence of a proton gradient across the membrane. The alpha chain is a regulatory subunit. The sequence is that of ATP synthase subunit alpha, chloroplastic from Angiopteris evecta (Mule's foot fern).